The chain runs to 121 residues: Parathyroid hormone 4 (121 aa).

The N-terminal stretch at 1–24 (MLKMQRSQQRVALMMLMVVAAVHC) is a signal peptide. Positions 25 to 29 (QESES) are excised as a propeptide. Residues 77–97 (RSRGAQLYSQPGREESSGGQK) are disordered.

Belongs to the parathyroid hormone family. As to expression, specifically expressed in a bilateral cluster of neurons in the dorsal region of the periventricular hypothalamus. Their axons project through the midbrain and hindbrain and down the spinal cord.

It is found in the secreted. Neuroendocrine peptide which is produced by a subset of neurons in the hypothalamus. Activates the G-protein coupled receptors pth1ra, pth1rb and pth2r with similar affinity. Receptor binding stimulates intracellular cAMP production. Plays a role in bone mineralization by regulating expression of factors involved in phosphate homeostasis. Important for embryonic bone development. The chain is Parathyroid hormone 4 from Danio rerio (Zebrafish).